The chain runs to 312 residues: Ubiquinone biosynthesis O-methyltransferase, mitochondrial (312 aa).

The N-terminal 32 residues, 1–32 (MLLRSRFLKVIHVRKQLSACSRFAIQTQTRCK), are a transit peptide targeting the mitochondrion. Positions 68, 130, 153, and 196 each coordinate S-adenosyl-L-methionine. Residues E197, E200, and H201 each contribute to the Mg(2+) site.

The protein belongs to the class I-like SAM-binding methyltransferase superfamily. UbiG/COQ3 family. Component of a multi-subunit COQ enzyme complex, composed of at least COQ3, COQ4, COQ5, COQ6, COQ7 and COQ9. Interacts directly with COQ4. It depends on Mg(2+) as a cofactor.

The protein localises to the mitochondrion inner membrane. The catalysed reaction is 3,4-dihydroxy-5-(all-trans-hexaprenyl)benzoate + S-adenosyl-L-methionine = 4-hydroxy-3-methoxy-5-(all-trans-hexaprenyl)benzoate + S-adenosyl-L-homocysteine + H(+). It catalyses the reaction a 3-demethylubiquinone + S-adenosyl-L-methionine = a ubiquinone + S-adenosyl-L-homocysteine. It carries out the reaction 3-demethylubiquinol-6 + S-adenosyl-L-methionine = ubiquinol-6 + S-adenosyl-L-homocysteine + H(+). Its pathway is cofactor biosynthesis; ubiquinone biosynthesis. With respect to regulation, regulated in response to catabolite repression. Functionally, O-methyltransferase required for two non-consecutive steps during ubiquinone biosynthesis. Catalyzes the 2 O-methylation of 3,4-dihydroxy-5-(all-trans-hexaprenyl)benzoic acid into 4-hydroxy-3-methoxy-5-(all-trans-hexaprenyl)benzoic acid. Also catalyzes the last step of ubiquinone biosynthesis by mediating methylation of 3-demethylubiquinone into ubiquinone. Also able to mediate the methylation of 3-demethylubiquinol-6 into ubiquinol-6. This is Ubiquinone biosynthesis O-methyltransferase, mitochondrial from Saccharomyces cerevisiae (strain ATCC 204508 / S288c) (Baker's yeast).